We begin with the raw amino-acid sequence, 222 residues long: Sigma non-opioid intracellular receptor 1 (222 aa).

Residues 1–7 (MGVAGPW) lie on the Lumenal side of the membrane. The chain crosses the membrane as a helical span at residues 8-29 (VLRVGLGLGAFALLLQGLRGWL). Residues 30 to 222 (ACKRYEFQPA…ASAFFSTLGC (193 aa)) lie on the Cytoplasmic side of the membrane. Residues 98 to 105 (SLTEYVLL) are important for ligand-binding. The segment at 176–222 (FVPSTLAFALADTLFSTQDFITLFYTLRAYTKGLLLEASAFFSTLGC) is C-terminal hydrophobic region.

The protein belongs to the ERG2 family. As to quaternary structure, homotrimer.

The protein localises to the nucleus inner membrane. It is found in the nucleus outer membrane. Its subcellular location is the nucleus envelope. It localises to the cytoplasmic vesicle. The protein resides in the endoplasmic reticulum membrane. The protein localises to the membrane. In terms of biological role, may function in lipid transport from the endoplasmic reticulum and be involved in a wide array of cellular functions probably through regulation of the biogenesis of lipid microdomains at the plasma membrane. May regulate calcium efflux at the endoplasmic reticulum. The chain is Sigma non-opioid intracellular receptor 1 (SIGMAR1) from Gallus gallus (Chicken).